The sequence spans 224 residues: DNA mismatch repair protein MutH (224 aa).

Belongs to the MutH family.

Its subcellular location is the cytoplasm. In terms of biological role, sequence-specific endonuclease that cleaves unmethylated GATC sequences. It is involved in DNA mismatch repair. The polypeptide is DNA mismatch repair protein MutH (Histophilus somni (strain 2336) (Haemophilus somnus)).